The sequence spans 312 residues: Ribonuclease H2 subunit B (312 aa).

A2 is subject to N-acetylalanine. Residues 236–256 form a disordered region; sequence EPSASLPNPPSKKIKLSDEPV. K295 is subject to N6-acetyllysine. Phosphoserine is present on S296.

Belongs to the RNase H2 subunit B family. As to quaternary structure, the RNase H2 complex is a heterotrimer composed of the catalytic subunit RNASEH2A and the non-catalytic subunits RNASEH2B and RNASEH2C. Widely expressed.

Its subcellular location is the nucleus. In terms of biological role, non catalytic subunit of RNase H2, an endonuclease that specifically degrades the RNA of RNA:DNA hybrids. Participates in DNA replication, possibly by mediating the removal of lagging-strand Okazaki fragment RNA primers during DNA replication. Mediates the excision of single ribonucleotides from DNA:RNA duplexes. The sequence is that of Ribonuclease H2 subunit B (RNASEH2B) from Homo sapiens (Human).